A 344-amino-acid polypeptide reads, in one-letter code: GTP 3',8-cyclase (344 aa).

The 227-residue stretch at 19-245 (PFGRAVTYLR…DIPYRTGGPA (227 aa)) folds into the Radical SAM core domain. Arg-28 provides a ligand contact to GTP. [4Fe-4S] cluster contacts are provided by Cys-35 and Cys-39. Residue Tyr-41 participates in S-adenosyl-L-methionine binding. Cys-42 is a binding site for [4Fe-4S] cluster. Arg-77 contacts GTP. Gly-81 contacts S-adenosyl-L-methionine. Thr-111 contacts GTP. Residue Ser-135 coordinates S-adenosyl-L-methionine. Residue Lys-171 coordinates GTP. Met-205 serves as a coordination point for S-adenosyl-L-methionine. Residues Cys-268 and Cys-271 each contribute to the [4Fe-4S] cluster site. 273 to 275 (RVR) provides a ligand contact to GTP. Cys-285 is a [4Fe-4S] cluster binding site.

It belongs to the radical SAM superfamily. MoaA family. In terms of assembly, monomer and homodimer. The cofactor is [4Fe-4S] cluster.

It catalyses the reaction GTP + AH2 + S-adenosyl-L-methionine = (8S)-3',8-cyclo-7,8-dihydroguanosine 5'-triphosphate + 5'-deoxyadenosine + L-methionine + A + H(+). Its pathway is cofactor biosynthesis; molybdopterin biosynthesis. Catalyzes the cyclization of GTP to (8S)-3',8-cyclo-7,8-dihydroguanosine 5'-triphosphate. The chain is GTP 3',8-cyclase from Brucella canis (strain ATCC 23365 / NCTC 10854 / RM-666).